The following is a 217-amino-acid chain: MANLPILLDYWPSMFGMRARVALREKGVEFEYREEDFSNKSPLLLQSNPIHKKIPVLVHNGKPVCESLNVVQYVDEAWPEKNPFFPSDPYGRAQARFWADFVDKKFTDAQFKVWGKKGEEQEAGKKEFIEAVKILESELGDKPYFGGDSFGYVDISLITFSSWFQAYEKFGNFSIESESPKLIAWAKRCMEKESVSKSLPDSEKIVAYAAEYRKNNL.

The GST N-terminal domain maps to 3–82 (NLPILLDYWP…YVDEAWPEKN (80 aa)). 3 residues coordinate glutathione: S13, I54, and S67. The 121-residue stretch at 88-208 (DPYGRAQARF…LPDSEKIVAY (121 aa)) folds into the GST C-terminal domain.

This sequence belongs to the GST superfamily. Tau family. As to quaternary structure, homodimerization. Interacts with JAR1/FIN219 under continuous far red (cFR) light to stimulate JAR1/FIN219 activity and substrate selectivity. Mostly associated with vascular tissues, especially near hydathodes.

The protein localises to the nucleus. The protein resides in the cytoplasm. It is found in the cytosol. The catalysed reaction is RX + glutathione = an S-substituted glutathione + a halide anion + H(+). Its activity is regulated as follows. Activated by JAR1/FIN219. Functionally, exhibits glutathione-dependent thiol transferase activities. Can use glutathione (GSH) and 1-chloro-2,4-dinitrobenzene (CDNB) as substrates. Involved in the regulation of far-red light influence on development. Regulator of the interplay between light and JA signaling by increasing JAR1/FIN219 efficiency. Maybe involved in gravitropic signal transduction. This is Glutathione S-transferase U20 from Arabidopsis thaliana (Mouse-ear cress).